The sequence spans 318 residues: Protoheme IX farnesyltransferase (318 aa).

Transmembrane regions (helical) follow at residues 31-51, 55-75, 98-118, 125-145, 153-173, 181-201, 206-228, 238-260, and 285-305; these read IILL…QGPL, LAIA…TLNC, IQPF…FILL, LAAG…THGL, IVIG…AVTG, ILFA…ALMI, AAVK…QILA, LALA…LLGL, and FSIF…LPGA.

Belongs to the UbiA prenyltransferase family. Protoheme IX farnesyltransferase subfamily.

The protein resides in the cell inner membrane. The catalysed reaction is heme b + (2E,6E)-farnesyl diphosphate + H2O = Fe(II)-heme o + diphosphate. The protein operates within porphyrin-containing compound metabolism; heme O biosynthesis; heme O from protoheme: step 1/1. Converts heme B (protoheme IX) to heme O by substitution of the vinyl group on carbon 2 of heme B porphyrin ring with a hydroxyethyl farnesyl side group. This is Protoheme IX farnesyltransferase from Synechococcus elongatus (strain ATCC 33912 / PCC 7942 / FACHB-805) (Anacystis nidulans R2).